A 360-amino-acid polypeptide reads, in one-letter code: BLOC-1-related complex subunit 6 (360 aa).

A disordered region spans residues 1–201 (MEAAQGRLGP…TGAGGGRRAT (201 aa)). Over residues 23–33 (ATFSGRPSRTP) the composition is skewed to polar residues. At Thr-41 the chain carries Phosphothreonine. Ser-130 bears the Phosphoserine mark. Over residues 144 to 155 (EGDDDDDEDEEA) the composition is skewed to acidic residues. A Phosphoserine modification is found at Ser-173. Residues 179–198 (GACGGGGSSSSGETGAGGGR) show a composition bias toward gly residues. Thr-201 is subject to Phosphothreonine. Phosphoserine is present on Ser-204.

Belongs to the BORCS6 family. In terms of assembly, component of the BLOC-one-related complex (BORC) which is composed of BLOC1S1, BLOC1S2, BORCS5, BORCS6, BORCS7, BORCS8, KXD1 and SNAPIN.

Its subcellular location is the lysosome membrane. In terms of biological role, as part of the BORC complex may play a role in lysosomes movement and localization at the cell periphery. Associated with the cytosolic face of lysosomes, the BORC complex may recruit ARL8B and couple lysosomes to microtubule plus-end-directed kinesin motor. This chain is BLOC-1-related complex subunit 6, found in Mus musculus (Mouse).